Here is a 450-residue protein sequence, read N- to C-terminus: Akuammiline synthase 2 (450 aa).

H154 acts as the Proton acceptor in catalysis. A Nuclear localization signal motif is present at residues 218-225 (MRRFVFDA). Residue D376 is the Proton acceptor of the active site.

It belongs to the plant acyltransferase family. As to quaternary structure, monomer.

It is found in the cytoplasm. The protein localises to the nucleus. The enzyme catalyses rhazimol + acetyl-CoA = akuammiline + CoA + H(+). It participates in alkaloid biosynthesis. Its function is as follows. Acyltransferase involved in the biosynthesis of akuammilan monoterpene indole alkaloids (MIAs) natural products, components with various biological properties such as antidiabetic, antibacterial, anti-inflammatory, anticancer, and antimalarial activities. Catalyzes the conversion of rhazimol to akuammiline. In Alstonia scholaris (Dogbane), this protein is Akuammiline synthase 2.